The chain runs to 306 residues: Aspartate carbamoyltransferase catalytic subunit (306 aa).

Carbamoyl phosphate is bound by residues R51 and T52. K80 contributes to the L-aspartate binding site. Carbamoyl phosphate-binding residues include R101, H129, and Q132. L-aspartate-binding residues include R162 and R224. Carbamoyl phosphate-binding residues include L263 and P264.

This sequence belongs to the aspartate/ornithine carbamoyltransferase superfamily. ATCase family. As to quaternary structure, heterododecamer (2C3:3R2) of six catalytic PyrB chains organized as two trimers (C3), and six regulatory PyrI chains organized as three dimers (R2).

It catalyses the reaction carbamoyl phosphate + L-aspartate = N-carbamoyl-L-aspartate + phosphate + H(+). Its pathway is pyrimidine metabolism; UMP biosynthesis via de novo pathway; (S)-dihydroorotate from bicarbonate: step 2/3. Its function is as follows. Catalyzes the condensation of carbamoyl phosphate and aspartate to form carbamoyl aspartate and inorganic phosphate, the committed step in the de novo pyrimidine nucleotide biosynthesis pathway. In Parabacteroides distasonis (strain ATCC 8503 / DSM 20701 / CIP 104284 / JCM 5825 / NCTC 11152), this protein is Aspartate carbamoyltransferase catalytic subunit.